Reading from the N-terminus, the 487-residue chain is Chromosomal replication initiator protein DnaA (487 aa).

The domain I, interacts with DnaA modulators stretch occupies residues 1-79 (MPNSMWHQCL…QAPRVMMKVG (79 aa)). Residues 78 to 138 (VGSAPKPTDP…PAPKAQAERR (61 aa)) are disordered. Residues 79–150 (GSAPKPTDPV…QVEGDIKHQS (72 aa)) are domain II. The domain III, AAA+ region stretch occupies residues 151–367 (FLNETFTFDT…GALRLVIANA (217 aa)). ATP contacts are provided by G195, G197, K198, and T199. Residues 368–487 (HFTGSEITPP…YQNFMRLLTT (120 aa)) form a domain IV, binds dsDNA region.

This sequence belongs to the DnaA family. Oligomerizes as a right-handed, spiral filament on DNA at oriC.

Its subcellular location is the cytoplasm. Plays an essential role in the initiation and regulation of chromosomal replication. ATP-DnaA binds to the origin of replication (oriC) to initiate formation of the DNA replication initiation complex once per cell cycle. Binds the DnaA box (a 9 base pair repeat at the origin) and separates the double-stranded (ds)DNA. Forms a right-handed helical filament on oriC DNA; dsDNA binds to the exterior of the filament while single-stranded (ss)DNA is stabiized in the filament's interior. The ATP-DnaA-oriC complex binds and stabilizes one strand of the AT-rich DNA unwinding element (DUE), permitting loading of DNA polymerase. After initiation quickly degrades to an ADP-DnaA complex that is not apt for DNA replication. Binds acidic phospholipids. The sequence is that of Chromosomal replication initiator protein DnaA from Marinobacter nauticus (strain ATCC 700491 / DSM 11845 / VT8) (Marinobacter aquaeolei).